The chain runs to 450 residues: NADH-quinone oxidoreductase subunit H (450 aa).

Transmembrane regions (helical) follow at residues 18–38 (WWLVLGKALAIFVFLVLTPLL), 91–111 (ILAPVIAAVPAFMAFAVIPFG), 128–148 (LPVAVLYVLAATSIGVYGIVL), 169–189 (VISYEIAMALSFAAVFLDAGT), 201–221 (HTWYVFLLLPSFLIYVTSMVG), 262–282 (VTVSALATTLFLGGWHAPFPL), 292–312 (WWPVLWFTLKVWGFLFVFVWL), 324–344 (FMGLGWKILIPISLVWVMIVA), and 358–378 (SIALVVAGLVVALVVVVLLWK). Residues 387-450 (APEKPVEPRG…TGPTQENSDD (64 aa)) are disordered. Over residues 390 to 400 (KPVEPRGRAEL) the composition is skewed to basic and acidic residues. Over residues 433 to 450 (VSVTGAHSTGPTQENSDD) the composition is skewed to polar residues.

This sequence belongs to the complex I subunit 1 family. NDH-1 is composed of 14 different subunits. Subunits NuoA, H, J, K, L, M, N constitute the membrane sector of the complex.

Its subcellular location is the cell membrane. The catalysed reaction is a quinone + NADH + 5 H(+)(in) = a quinol + NAD(+) + 4 H(+)(out). Functionally, NDH-1 shuttles electrons from NADH, via FMN and iron-sulfur (Fe-S) centers, to quinones in the respiratory chain. The immediate electron acceptor for the enzyme in this species is believed to be ubiquinone. Couples the redox reaction to proton translocation (for every two electrons transferred, four hydrogen ions are translocated across the cytoplasmic membrane), and thus conserves the redox energy in a proton gradient. This subunit may bind ubiquinone. The polypeptide is NADH-quinone oxidoreductase subunit H (Rhodococcus jostii (strain RHA1)).